We begin with the raw amino-acid sequence, 477 residues long: Aspartyl/glutamyl-tRNA(Asn/Gln) amidotransferase subunit B (477 aa).

This sequence belongs to the GatB/GatE family. GatB subfamily. In terms of assembly, heterotrimer of A, B and C subunits.

The catalysed reaction is L-glutamyl-tRNA(Gln) + L-glutamine + ATP + H2O = L-glutaminyl-tRNA(Gln) + L-glutamate + ADP + phosphate + H(+). The enzyme catalyses L-aspartyl-tRNA(Asn) + L-glutamine + ATP + H2O = L-asparaginyl-tRNA(Asn) + L-glutamate + ADP + phosphate + 2 H(+). Its function is as follows. Allows the formation of correctly charged Asn-tRNA(Asn) or Gln-tRNA(Gln) through the transamidation of misacylated Asp-tRNA(Asn) or Glu-tRNA(Gln) in organisms which lack either or both of asparaginyl-tRNA or glutaminyl-tRNA synthetases. The reaction takes place in the presence of glutamine and ATP through an activated phospho-Asp-tRNA(Asn) or phospho-Glu-tRNA(Gln). This Lawsonia intracellularis (strain PHE/MN1-00) protein is Aspartyl/glutamyl-tRNA(Asn/Gln) amidotransferase subunit B.